The primary structure comprises 287 residues: Protein REVEILLE 3 (287 aa).

The HTH myb-type domain occupies 56 to 110 (TITKSRENWTEQEHDKFLEALHLFDRDWKKIKAFVGSKTVIQIRSHAQKYFLKVQ). The H-T-H motif DNA-binding region spans 83 to 106 (WKKIKAFVGSKTVIQIRSHAQKYF). Residues 111–135 (KNGTKEHLPPPRPKRKANHPYPQKA) form a disordered region.

It is found in the nucleus. Its function is as follows. Probable transcription factor. The polypeptide is Protein REVEILLE 3 (RVE3) (Arabidopsis thaliana (Mouse-ear cress)).